The following is a 70-amino-acid chain: Putative membrane protein insertion efficiency factor (70 aa).

It belongs to the UPF0161 family.

The protein localises to the cell membrane. Its function is as follows. Could be involved in insertion of integral membrane proteins into the membrane. The chain is Putative membrane protein insertion efficiency factor from Chloroflexus aurantiacus (strain ATCC 29366 / DSM 635 / J-10-fl).